The chain runs to 380 residues: Queuine tRNA-ribosyltransferase (380 aa).

Asp-96 (proton acceptor) is an active-site residue. Residues 96 to 100 (DSGGF), Asp-150, Gln-193, and Gly-220 contribute to the substrate site. Positions 251–257 (GVGAPDS) are RNA binding. Residue Asp-270 is the Nucleophile of the active site. An RNA binding; important for wobble base 34 recognition region spans residues 275–279 (TRIAR). The Zn(2+) site is built by Cys-308, Cys-310, Cys-313, and His-339.

This sequence belongs to the queuine tRNA-ribosyltransferase family. In terms of assembly, homodimer. Within each dimer, one monomer is responsible for RNA recognition and catalysis, while the other monomer binds to the replacement base PreQ1. Requires Zn(2+) as cofactor.

It carries out the reaction 7-aminomethyl-7-carbaguanine + guanosine(34) in tRNA = 7-aminomethyl-7-carbaguanosine(34) in tRNA + guanine. It participates in tRNA modification; tRNA-queuosine biosynthesis. In terms of biological role, catalyzes the base-exchange of a guanine (G) residue with the queuine precursor 7-aminomethyl-7-deazaguanine (PreQ1) at position 34 (anticodon wobble position) in tRNAs with GU(N) anticodons (tRNA-Asp, -Asn, -His and -Tyr). Catalysis occurs through a double-displacement mechanism. The nucleophile active site attacks the C1' of nucleotide 34 to detach the guanine base from the RNA, forming a covalent enzyme-RNA intermediate. The proton acceptor active site deprotonates the incoming PreQ1, allowing a nucleophilic attack on the C1' of the ribose to form the product. After dissociation, two additional enzymatic reactions on the tRNA convert PreQ1 to queuine (Q), resulting in the hypermodified nucleoside queuosine (7-(((4,5-cis-dihydroxy-2-cyclopenten-1-yl)amino)methyl)-7-deazaguanosine). This chain is Queuine tRNA-ribosyltransferase, found in Streptococcus sanguinis (strain SK36).